Here is a 261-residue protein sequence, read N- to C-terminus: Carbonic anhydrase 1 (261 aa).

The residue at position 2 (A2) is an N-acetylalanine. An Alpha-carbonic anhydrase domain is found at A4 to F261. H65 functions as the Proton donor/acceptor in the catalytic mechanism. Zn(2+)-binding residues include H95, H97, and H120. Substrate-binding positions include T200 and T200 to H201. Residues A239–F261 are disordered.

The protein belongs to the alpha-carbonic anhydrase family. The cofactor is Zn(2+).

It localises to the cytoplasm. The catalysed reaction is hydrogencarbonate + H(+) = CO2 + H2O. It catalyses the reaction urea = cyanamide + H2O. Its activity is regulated as follows. Inhibited by acetazolamide. Functionally, catalyzes the reversible hydration of carbon dioxide. Can hydrate cyanamide to urea. The sequence is that of Carbonic anhydrase 1 (Ca1) from Mus musculus (Mouse).